A 476-amino-acid polypeptide reads, in one-letter code: Transcription factor EB (476 aa).

Disordered stretches follow at residues 1 to 66 (MASR…PPVP) and 107 to 142 (HISP…APNS). Residues 1-167 (MASRIGLRMQ…DDVIDNIMRL (167 aa)) are interaction with ACSS2. Residues 26 to 44 (QQQAVMHYMQQQQQQQQQQ) show a composition bias toward low complexity. Ser-109, Ser-114, Ser-122, and Ser-138 each carry phosphoserine. Residues 132–142 (SSSAGNSAPNS) are compositionally biased toward low complexity. Positions 136 to 153 (GNSAPNSPMAMLHIGSNP) match the Nuclear export signal motif. Ser-142 carries the phosphoserine; by MTOR modification. The tract at residues 156-165 (ELDDVIDNIM) is strong transcription activation domain. The residue at position 183 (Thr-183) is a Phosphothreonine. Ser-211 carries the phosphoserine; by MTOR modification. Residue Cys-212 is modified to S-(2,3-dicarboxypropyl)cysteine. Residues 235–288 (QKKDNHNLIERRRRFNINDRIKELGMLIPKANDLDVRWNKGTILKASVDYIRRM) form the bHLH domain. Residues 245 to 248 (RRRR) carry the Nuclear localization signal motif. Positions 298–319 (LENHSRRLEMTNKQLWLRIQEL) are leucine-zipper. Ser-332 is subject to Phosphoserine. The tract at residues 349 to 430 (ELPSEEGPGE…HGSPFPSLSK (82 aa)) is disordered. The span at 369-390 (PEPLPALPPQAPLPLPTQPPSP) shows a compositional bias: pro residues. Ser-423, Ser-441, Ser-466, Ser-467, and Ser-469 each carry phosphoserine. A compositionally biased stretch (low complexity) spans 447-469 (SDPLLSTMSPEASKASSRRSSFS). The tract at residues 447 to 476 (SDPLLSTMSPEASKASSRRSSFSMEEGDVL) is disordered.

This sequence belongs to the MiT/TFE family. In terms of assembly, homodimer and heterodimer; with TFE3 or MITF. Interacts (when phosphorylated by MTOR) with YWHAZ; promoting retention in the cytosol. Interacts with IRGM; promoting association between TFEB and PPP3CB and dephosphorylation. Interacts with small GTPases Rag (RagA/RRAGA, RagB/RRAGB, RagC/RRAGC and/or RagD/RRAGD); promoting its recruitment to lysosomal membrane in the presence of nutrients. Interacts with ACSS2. Post-translationally, phosphorylation at Ser-211 by MTOR via non-canonical mTORC1 pathway regulates its subcellular location and activity. When nutrients are present, phosphorylation by MTOR promotes association with 14-3-3/YWHA adapters and retention in the cytosol. Inhibition of mTORC1, starvation and lysosomal disruption, promotes dephosphorylation by calcineurin PPP3CB and translocation to the nucleus. Dephosphorylated by calcineurin PPP3CB in response to lysosomal Ca(2+) release. IRGM promotes dephosphorylation by calcineurin PPP3CB, resulting in TFEB nuclear translocation and stimulation of lysosomal biogenesis. Dephosphorylated by phosphatase PPP3CA following Coxsackievirus B3 infection, leading to nuclear translocation. Exported from the nucleus in a mTORC1-dependent manner in response to nutrient availability. In terms of processing, alkylated via a non-enzymatic covalent modification. Itaconate, an anti-inflammatory metabolite generated in response to lipopolysaccharide, alkylates Cys-212, preventing association with 14-3-3/YWHA adapters, thereby promoting nuclear translocation and activity. Sumoylated; does not affect dimerization with MITF. Post-translationally, (Microbial infection) Cleavage by Coxsackievirus B3 protease 3C after site Gln-60. This non-phosphorylated cleavage product retains its ability to interact with TFEB, TFE3 or MITF and presents impaired transcriptional activity, resulting in disruption of lysosomal functions and increased viral infection.

Its subcellular location is the nucleus. The protein resides in the cytoplasm. It localises to the cytosol. The protein localises to the lysosome membrane. Inhibited by eltrombopag drug, which binds to the bHLH domain and disrupts DNA-binding. In terms of biological role, transcription factor that acts as a master regulator of lysosomal biogenesis, autophagy, lysosomal exocytosis, lipid catabolism, energy metabolism and immune response. Specifically recognizes and binds E-box sequences (5'-CANNTG-3'); efficient DNA-binding requires dimerization with itself or with another MiT/TFE family member such as TFE3 or MITF. Involved in the cellular response to amino acid availability by acting downstream of MTOR: in the presence of nutrients, TFEB phosphorylation by MTOR promotes its cytosolic retention and subsequent inactivation. Upon starvation or lysosomal stress, inhibition of MTOR induces TFEB dephosphorylation, resulting in nuclear localization and transcription factor activity. Specifically recognizes and binds the CLEAR-box sequence (5'-GTCACGTGAC-3') present in the regulatory region of many lysosomal genes, leading to activate their expression, thereby playing a central role in expression of lysosomal genes. Regulates lysosomal positioning in response to nutrient deprivation by promoting the expression of PIP4P1. Acts as a positive regulator of autophagy by promoting expression of genes involved in autophagy. In association with TFE3, activates the expression of CD40L in T-cells, thereby playing a role in T-cell-dependent antibody responses in activated CD4(+) T-cells and thymus-dependent humoral immunity. Specifically recognizes the gamma-E3 box, a subset of E-boxes, present in the heavy-chain immunoglobulin enhancer. Plays a role in the signal transduction processes required for normal vascularization of the placenta. Involved in the immune response to infection by the bacteria S.aureus, S.typhimurium or S.enterica: infection promotes itaconate production, leading to alkylation, resulting in nuclear localization and transcription factor activity. Itaconate-mediated alkylation activates TFEB-dependent lysosomal biogenesis, facilitating the bacteria clearance during the antibacterial innate immune response. In association with ACSS2, promotes the expression of genes involved in lysosome biogenesis and both autophagy upon glucose deprivation. The sequence is that of Transcription factor EB from Homo sapiens (Human).